The chain runs to 513 residues: ATP synthase subunit alpha 1 (513 aa).

169–176 (GDRQTGKT) is an ATP binding site.

This sequence belongs to the ATPase alpha/beta chains family. As to quaternary structure, F-type ATPases have 2 components, CF(1) - the catalytic core - and CF(0) - the membrane proton channel. CF(1) has five subunits: alpha(3), beta(3), gamma(1), delta(1), epsilon(1). CF(0) has three main subunits: a(1), b(2) and c(9-12). The alpha and beta chains form an alternating ring which encloses part of the gamma chain. CF(1) is attached to CF(0) by a central stalk formed by the gamma and epsilon chains, while a peripheral stalk is formed by the delta and b chains.

It localises to the cell inner membrane. The enzyme catalyses ATP + H2O + 4 H(+)(in) = ADP + phosphate + 5 H(+)(out). Functionally, produces ATP from ADP in the presence of a proton gradient across the membrane. The alpha chain is a regulatory subunit. The polypeptide is ATP synthase subunit alpha 1 (Nitrosomonas eutropha (strain DSM 101675 / C91 / Nm57)).